The following is a 1058-amino-acid chain: Carbamoyl phosphate synthase large chain (1058 aa).

A carboxyphosphate synthetic domain region spans residues 1-401; sequence MSKRKDIQKI…SLLKACRSLE (401 aa). Residues arginine 129, arginine 169, glycine 175, glycine 176, arginine 208, isoleucine 210, glutamate 215, glycine 241, isoleucine 242, histidine 243, glutamine 284, and glutamate 298 each coordinate ATP. The ATP-grasp 1 domain maps to 133–327; the sequence is KQLMQELDQP…IAKLAAKIAV (195 aa). Mg(2+) contacts are provided by glutamine 284, glutamate 298, and asparagine 300. Residues glutamine 284, glutamate 298, and asparagine 300 each contribute to the Mn(2+) site. Residues 402–546 form an oligomerization domain region; that stretch reads IGVCHNEMTS…YSTYELENES (145 aa). The interval 547 to 929 is carbamoyl phosphate synthetic domain; that stretch reads VQSNKESILV…ALYKAFEANN (383 aa). The 191-residue stretch at 671-861 folds into the ATP-grasp 2 domain; that stretch reads EKALKELGIP…MAQIATKLIL (191 aa). The ATP site is built by arginine 707, serine 746, isoleucine 748, glutamate 752, glycine 777, valine 778, histidine 779, serine 780, glutamine 820, and glutamate 832. Residues glutamine 820, glutamate 832, and asparagine 834 each coordinate Mg(2+). Glutamine 820, glutamate 832, and asparagine 834 together coordinate Mn(2+). The region spanning 930 to 1058 is the MGS-like domain; that stretch reads SHLSEFGQIV…ESRCFNIEAI (129 aa). The allosteric domain stretch occupies residues 930–1058; the sequence is SHLSEFGQIV…ESRCFNIEAI (129 aa).

Belongs to the CarB family. In terms of assembly, composed of two chains; the small (or glutamine) chain promotes the hydrolysis of glutamine to ammonia, which is used by the large (or ammonia) chain to synthesize carbamoyl phosphate. Tetramer of heterodimers (alpha,beta)4. The cofactor is Mg(2+). It depends on Mn(2+) as a cofactor.

It catalyses the reaction hydrogencarbonate + L-glutamine + 2 ATP + H2O = carbamoyl phosphate + L-glutamate + 2 ADP + phosphate + 2 H(+). The enzyme catalyses hydrogencarbonate + NH4(+) + 2 ATP = carbamoyl phosphate + 2 ADP + phosphate + 2 H(+). Its pathway is amino-acid biosynthesis; L-arginine biosynthesis; carbamoyl phosphate from bicarbonate: step 1/1. It participates in pyrimidine metabolism; UMP biosynthesis via de novo pathway; (S)-dihydroorotate from bicarbonate: step 1/3. In terms of biological role, large subunit of the glutamine-dependent carbamoyl phosphate synthetase (CPSase). CPSase catalyzes the formation of carbamoyl phosphate from the ammonia moiety of glutamine, carbonate, and phosphate donated by ATP, constituting the first step of 2 biosynthetic pathways, one leading to arginine and/or urea and the other to pyrimidine nucleotides. The large subunit (synthetase) binds the substrates ammonia (free or transferred from glutamine from the small subunit), hydrogencarbonate and ATP and carries out an ATP-coupled ligase reaction, activating hydrogencarbonate by forming carboxy phosphate which reacts with ammonia to form carbamoyl phosphate. The chain is Carbamoyl phosphate synthase large chain from Streptococcus pyogenes serotype M5 (strain Manfredo).